The primary structure comprises 384 residues: 23S rRNA (uracil(747)-C(5))-methyltransferase RlmC (384 aa).

Positions 7, 15, 18, and 94 each coordinate [4Fe-4S] cluster. S-adenosyl-L-methionine contacts are provided by glutamine 219, phenylalanine 248, glutamate 269, and asparagine 316. Cysteine 343 functions as the Nucleophile in the catalytic mechanism.

Belongs to the class I-like SAM-binding methyltransferase superfamily. RNA M5U methyltransferase family. RlmC subfamily.

It catalyses the reaction uridine(747) in 23S rRNA + S-adenosyl-L-methionine = 5-methyluridine(747) in 23S rRNA + S-adenosyl-L-homocysteine + H(+). Functionally, catalyzes the formation of 5-methyl-uridine at position 747 (m5U747) in 23S rRNA. This is 23S rRNA (uracil(747)-C(5))-methyltransferase RlmC from Shewanella sp. (strain MR-4).